Consider the following 444-residue polypeptide: Serine/threonine-protein kinase 2 (444 aa).

A Protein kinase domain is found at 87-444; the sequence is NRDFYHLSTG…WIDGKSTSHQ (358 aa). Residues 93–101 and K118 each bind ATP; that span reads LSTGGYGII. The active-site Proton acceptor is the D307.

This sequence belongs to the protein kinase superfamily. Ser/Thr protein kinase family. Poxviruses subfamily. In terms of processing, phosphorylated in vivo. Autophosphorylated in vitro.

It is found in the host endoplasmic reticulum. The protein resides in the host endoplasmic reticulum-Golgi intermediate compartment. It catalyses the reaction L-seryl-[protein] + ATP = O-phospho-L-seryl-[protein] + ADP + H(+). The catalysed reaction is L-threonyl-[protein] + ATP = O-phospho-L-threonyl-[protein] + ADP + H(+). Functionally, essential serine-protein kinase involved in the early stage of virion morphogenesis. This is Serine/threonine-protein kinase 2 (OPG054) from Vertebrata (FPV).